The primary structure comprises 639 residues: Far upstream element-binding protein 1 (639 aa).

Disordered regions lie at residues 1–27 (MADY…NDAF) and 40–88 (KIGG…LPPM). The residue at position 2 (Ala2) is an N-acetylalanine. The span at 14 to 23 (SAGGGGGGGV) shows a compositional bias: gly residues. Phosphoserine is present on residues Ser48 and Ser51. Positions 61–73 (RPLEDGDQPDAKK) are enriched in basic and acidic residues. KH domains lie at 95–159 (VMTE…KRLL), 180–246 (NAVQ…KEMV), and 270–334 (NEGI…AEII). Phosphoserine is present on Ser135. The residue at position 148 (Thr148) is a Phosphothreonine. 4 positions are modified to omega-N-methylarginine: Arg316, Arg354, Arg356, and Arg358. Residues 341–360 (VQAGNPGGPGPGGRGRGRGQ) form a disordered region. A compositionally biased stretch (gly residues) spans 345-360 (NPGGPGPGGRGRGRGQ). The KH 4 domain occupies 371–438 (LQEFNFIVPT…QQIDYARQLI (68 aa)). The residue at position 427 (Thr427) is a Phosphothreonine. Disordered stretches follow at residues 442–527 (IGGP…GTDP) and 543–574 (QAQP…PAGQ). Positions 463-500 (PHGPPGPPGPGTPMGPYNPAPYNPGPPGPAPHGPPAPY) are enriched in pro residues. A compositionally biased stretch (low complexity) spans 551 to 568 (PAGAPTTTQTNGQGDQQN). Ser625 is modified (phosphoserine).

Found in a complex with PUF60 and far upstream element (FUSE) DNA segment. Interacts with PUF60 and JTV1. In terms of processing, ubiquitinated. This targets the protein for proteasome-mediated degradation.

It is found in the nucleus. Its function is as follows. Regulates MYC expression by binding to a single-stranded far-upstream element (FUSE) upstream of the MYC promoter. May act both as activator and repressor of transcription. The chain is Far upstream element-binding protein 1 from Rattus norvegicus (Rat).